We begin with the raw amino-acid sequence, 369 residues long: MTLEAIRYSPGSLQILDQLQLPEHCHYEALSSVQQASEAIRAMKVRGAPAIALVGCLSLAVELRAGAGGPGLAALVAFVRDQLRLLVAARPTAVNMARAARDLGQVAAQEAEREGATEETVRERVIRFAEDMLEKDLKDNRSIGDLGARHLLEQTNPRGGKVTVLTHCNTGALATAGYGTALGVIRSLHEMGRLEHTFCTETRPYNQGARLTAFELVYEQIPATLITDSMAAAAMAHRGVSAVVVGADRVVANGDTANKIGTYQLAIVAKHHGVPFYVAAPSSSCDLHLETGKEIVIEERPSQELTDLNGVRIAAQGIRVWNPAFDVTPHELITGGIITELGVFAPEELRGALSASVFSEGQTLDSPWV.

Met-1 carries the N-acetylmethionine modification. At Arg-158 the chain carries Omega-N-methylarginine. Asp-248 functions as the Proton donor in the catalytic mechanism. A Phosphoserine modification is found at Ser-366.

The protein belongs to the eIF-2B alpha/beta/delta subunits family. MtnA subfamily.

It localises to the cytoplasm. The protein localises to the nucleus. It catalyses the reaction 5-(methylsulfanyl)-alpha-D-ribose 1-phosphate = 5-(methylsulfanyl)-D-ribulose 1-phosphate. It functions in the pathway amino-acid biosynthesis; L-methionine biosynthesis via salvage pathway; L-methionine from S-methyl-5-thio-alpha-D-ribose 1-phosphate: step 1/6. Functionally, catalyzes the interconversion of methylthioribose-1-phosphate (MTR-1-P) into methylthioribulose-1-phosphate (MTRu-1-P). The sequence is that of Methylthioribose-1-phosphate isomerase (Mri1) from Mus musculus (Mouse).